Here is a 1083-residue protein sequence, read N- to C-terminus: Probable arabinosyltransferase B (1083 aa).

The next 13 membrane-spanning stretches (helical) occupy residues 23-45, 222-239, 252-274, 331-350, 357-379, 421-443, 456-478, 525-542, 555-572, 576-598, 611-633, 648-670, and 690-712; these read VARWVAAIAGLIGFVSSVVTPLL, FAMMLAIITTVGALVALW, LIPARWSMFTLVDVAVIFGFLLW, SMWIRLPDLICGVACWLLLS, LGPAIVGFKPALWAAGLVLLAAW, TAAFTIGIQPTGLIAVAALLAGG, AVGAWPLVAPLLAAGTVVLTVVF, FGFLITALCLFTAVLITL, AWRLIGTILGTMFFLTFA, WVHHFGLFAALGAAVAALTTVLV, AFLAALLFVMTLCFATTNGWWYV, DGITFSTIFFILFAIVALYAYYL, and FWAPIPFAAGLMTLVFIGSMVAG.

The protein belongs to the emb family.

It is found in the cell membrane. Its function is as follows. Arabinosyl transferase responsible for the polymerization of arabinose into the arabinan of arabinogalactan. This Mycobacterium leprae (strain TN) protein is Probable arabinosyltransferase B (embB).